Consider the following 142-residue polypeptide: Peptide methionine sulfoxide reductase MsrB (142 aa).

In terms of domain architecture, MsrB spans 2–125 (IKKNKEELND…NSAAIQFIPY (124 aa)). C114 functions as the Nucleophile in the catalytic mechanism.

This sequence belongs to the MsrB Met sulfoxide reductase family.

It catalyses the reaction L-methionyl-[protein] + [thioredoxin]-disulfide + H2O = L-methionyl-(R)-S-oxide-[protein] + [thioredoxin]-dithiol. This chain is Peptide methionine sulfoxide reductase MsrB, found in Staphylococcus epidermidis (strain ATCC 35984 / DSM 28319 / BCRC 17069 / CCUG 31568 / BM 3577 / RP62A).